The sequence spans 373 residues: Queuine tRNA-ribosyltransferase (373 aa).

Asp-90 functions as the Proton acceptor in the catalytic mechanism. Residues 90-94 (DSGGF), Asp-144, Gln-193, and Gly-220 contribute to the substrate site. The RNA binding stretch occupies residues 251–257 (GVGTPED). Catalysis depends on Asp-270, which acts as the Nucleophile. Residues 275-279 (TRNAR) form an RNA binding; important for wobble base 34 recognition region. Positions 308, 310, 313, and 339 each coordinate Zn(2+).

The protein belongs to the queuine tRNA-ribosyltransferase family. Homodimer. Within each dimer, one monomer is responsible for RNA recognition and catalysis, while the other monomer binds to the replacement base PreQ1. The cofactor is Zn(2+).

The enzyme catalyses 7-aminomethyl-7-carbaguanine + guanosine(34) in tRNA = 7-aminomethyl-7-carbaguanosine(34) in tRNA + guanine. The protein operates within tRNA modification; tRNA-queuosine biosynthesis. Functionally, catalyzes the base-exchange of a guanine (G) residue with the queuine precursor 7-aminomethyl-7-deazaguanine (PreQ1) at position 34 (anticodon wobble position) in tRNAs with GU(N) anticodons (tRNA-Asp, -Asn, -His and -Tyr). Catalysis occurs through a double-displacement mechanism. The nucleophile active site attacks the C1' of nucleotide 34 to detach the guanine base from the RNA, forming a covalent enzyme-RNA intermediate. The proton acceptor active site deprotonates the incoming PreQ1, allowing a nucleophilic attack on the C1' of the ribose to form the product. After dissociation, two additional enzymatic reactions on the tRNA convert PreQ1 to queuine (Q), resulting in the hypermodified nucleoside queuosine (7-(((4,5-cis-dihydroxy-2-cyclopenten-1-yl)amino)methyl)-7-deazaguanosine). The polypeptide is Queuine tRNA-ribosyltransferase (Campylobacter jejuni subsp. jejuni serotype O:6 (strain 81116 / NCTC 11828)).